Reading from the N-terminus, the 347-residue chain is NADH-ubiquinone oxidoreductase chain 2 (347 aa).

The next 10 helical transmembrane spans lie at 1 to 21, 25 to 45, 59 to 79, 111 to 131, 149 to 169, 178 to 198, 201 to 221, 237 to 257, 276 to 296, and 326 to 346; these read MNPLVFTVIMSTVMLGTAIVA, HWLMAWIGFEMNMLAVIPILM, YFLTQATASMLLMLAVTMNLV, FHFWVPEVAQGISLPSGLILL, INLDLLMTLSILSIGIGGWGG, IMAYSSIAHMGWMTTILAYNP, TLLNLAIYILLTTTTFMMFML, MPLLTTAILLTMLSLGGLPPL, VILPTMMAVMALLNLYFYMRL, and LSPLIILSTLILPLSPMLALL.

This sequence belongs to the complex I subunit 2 family. Core subunit of respiratory chain NADH dehydrogenase (Complex I) which is composed of 45 different subunits. Interacts with TMEM242.

It localises to the mitochondrion inner membrane. The catalysed reaction is a ubiquinone + NADH + 5 H(+)(in) = a ubiquinol + NAD(+) + 4 H(+)(out). In terms of biological role, core subunit of the mitochondrial membrane respiratory chain NADH dehydrogenase (Complex I) which catalyzes electron transfer from NADH through the respiratory chain, using ubiquinone as an electron acceptor. Essential for the catalytic activity and assembly of complex I. The sequence is that of NADH-ubiquinone oxidoreductase chain 2 from Pteropus pumilus (Little golden-mantled flying fox).